Reading from the N-terminus, the 212-residue chain is Adenylate kinase (212 aa).

Residue 10–15 (GAGKGT) participates in ATP binding. Positions 30–59 (STGDMFRAAMANQTEMGTLAKSFIDKGELV) are NMP. Residues threonine 31, arginine 36, 57 to 59 (ELV), 86 to 89 (GYPR), and glutamine 93 each bind AMP. Positions 127-159 (GRIINRKTGETYHKVFNPPADYNEDDYYQREDD) are LID. Residues arginine 128 and 137-138 (TY) each bind ATP. Residues arginine 156 and arginine 167 each contribute to the AMP site. Glutamine 195 contributes to the ATP binding site.

This sequence belongs to the adenylate kinase family. In terms of assembly, monomer.

It is found in the cytoplasm. The enzyme catalyses AMP + ATP = 2 ADP. It functions in the pathway purine metabolism; AMP biosynthesis via salvage pathway; AMP from ADP: step 1/1. Its function is as follows. Catalyzes the reversible transfer of the terminal phosphate group between ATP and AMP. Plays an important role in cellular energy homeostasis and in adenine nucleotide metabolism. The polypeptide is Adenylate kinase (Streptococcus mutans serotype c (strain ATCC 700610 / UA159)).